The chain runs to 360 residues: 3-dehydroquinate synthase (360 aa).

Residues 71-76 (DGEAHK), 105-109 (GVVGD), 129-130 (TT), Lys-142, and Lys-151 each bind NAD(+). Glu-184, His-247, and His-264 together coordinate Zn(2+).

It belongs to the sugar phosphate cyclases superfamily. Dehydroquinate synthase family. Requires Co(2+) as cofactor. The cofactor is Zn(2+). NAD(+) is required as a cofactor.

The protein resides in the cytoplasm. It catalyses the reaction 7-phospho-2-dehydro-3-deoxy-D-arabino-heptonate = 3-dehydroquinate + phosphate. The protein operates within metabolic intermediate biosynthesis; chorismate biosynthesis; chorismate from D-erythrose 4-phosphate and phosphoenolpyruvate: step 2/7. Catalyzes the conversion of 3-deoxy-D-arabino-heptulosonate 7-phosphate (DAHP) to dehydroquinate (DHQ). This chain is 3-dehydroquinate synthase, found in Azoarcus sp. (strain BH72).